Consider the following 358-residue polypeptide: Dynein axonemal assembly factor 10 (358 aa).

6 WD repeats span residues 63 to 105 (EKKH…QPVF), 109 to 154 (AHAS…APVA), 162 to 205 (NNVR…VRWE), 207 to 249 (NVRN…PKKG), 258 to 298 (TAGA…QRKV), and 320 to 358 (ISTQ…LNKV).

In terms of assembly, interacts with PIH1D1; the interaction associates DNAAF10 with the R2TP complex. Interacts with several dynein axonemal assembly factors.

It localises to the dynein axonemal particle. In terms of biological role, key assembly factor specifically required for the stability of axonemal dynein heavy chains in cytoplasm. The polypeptide is Dynein axonemal assembly factor 10 (dnaaf10) (Chlamydomonas reinhardtii (Chlamydomonas smithii)).